The following is a 451-amino-acid chain: MVEQKGNILMKRYEIGKLLGQGSFAKVYHGRNIKNSQSVAIKVIDKEKILKCELMDQIRREISVMNLVRHPCIVQLYEVMATKTKIYFILEYVKGGELFNKVRRGRLKEEVARKYFQQLISAIDFCHSRGVYHRDLKPENLLLDENRNLKISDFGLSALAECKRQDGLLHTTCGTPAYVAPEVINRKGYDGAKADVWACGVILYVLLAGYLPFQDKNVINMYKKICKAEFKWPSWFSSDIRKLLRRILDPNPATRISVSEIMEDPWFRVGLNSDLLNKTIPTDKVDKVVHVDMDSTFGNLSNNINEGKQEAENLTSLNAFDIISLSSGFDLSAMFEDENSKEESKFTSTNTATTITKKLEDVAKNLRLKFLKKNGGLLKMEGSKPGRKGVMSINAEIFQITPDFHLVEFTKINGDTLEYQKVKQEMRPALKDIVWAWQGEQPQPQSLNEQS.

Residues 13 to 267 (YEIGKLLGQG…VSEIMEDPWF (255 aa)) form the Protein kinase domain. Residues 19 to 27 (LGQGSFAKV) and K42 each bind ATP. D135 acts as the Proton acceptor in catalysis. The activation loop stretch occupies residues 153–182 (DFGLSALAECKRQDGLLHTTCGTPAYVAPE). Residues 304 to 336 (INEGKQEAENLTSLNAFDIISLSSGFDLSAMFE) form the NAF domain. The interval 341-370 (KEESKFTSTNTATTITKKLEDVAKNLRLKF) is PPI.

It belongs to the protein kinase superfamily. CAMK Ser/Thr protein kinase family. SNF1 subfamily. Mn(2+) is required as a cofactor.

It catalyses the reaction L-seryl-[protein] + ATP = O-phospho-L-seryl-[protein] + ADP + H(+). The enzyme catalyses L-threonyl-[protein] + ATP = O-phospho-L-threonyl-[protein] + ADP + H(+). Functionally, CIPK serine-threonine protein kinases interact with CBL proteins. Binding of a CBL protein to the regulatory NAF domain of CIPK protein lead to the activation of the kinase in a calcium-dependent manner. The sequence is that of CBL-interacting protein kinase 10 (CIPK10) from Oryza sativa subsp. japonica (Rice).